The chain runs to 323 residues: D-alanine--D-alanine ligase (323 aa).

The region spanning 120-319 is the ATP-grasp domain; that stretch reads LSVLKPYGIK…LEDLFTNAIE (200 aa). 148–203 provides a ligand contact to ATP; the sequence is VKKVGLPCFVKPNKAGSSFGISKVKSEAELPIAIEVAYKEDNEIIIESFLDGTEVS. 3 residues coordinate Mg(2+): glutamate 274, glutamate 286, and asparagine 288.

This sequence belongs to the D-alanine--D-alanine ligase family. Requires Mg(2+) as cofactor. It depends on Mn(2+) as a cofactor.

Its subcellular location is the cytoplasm. The enzyme catalyses 2 D-alanine + ATP = D-alanyl-D-alanine + ADP + phosphate + H(+). The protein operates within cell wall biogenesis; peptidoglycan biosynthesis. In terms of biological role, cell wall formation. The polypeptide is D-alanine--D-alanine ligase (Flavobacterium johnsoniae (strain ATCC 17061 / DSM 2064 / JCM 8514 / BCRC 14874 / CCUG 350202 / NBRC 14942 / NCIMB 11054 / UW101) (Cytophaga johnsonae)).